Here is a 487-residue protein sequence, read N- to C-terminus: Glycogen synthase (487 aa).

An ADP-alpha-D-glucose-binding site is contributed by Lys-19.

This sequence belongs to the glycosyltransferase 1 family. Bacterial/plant glycogen synthase subfamily.

The catalysed reaction is [(1-&gt;4)-alpha-D-glucosyl](n) + ADP-alpha-D-glucose = [(1-&gt;4)-alpha-D-glucosyl](n+1) + ADP + H(+). It participates in glycan biosynthesis; glycogen biosynthesis. Its function is as follows. Synthesizes alpha-1,4-glucan chains using ADP-glucose. The chain is Glycogen synthase from Moorella thermoacetica (strain ATCC 39073 / JCM 9320).